Here is a 105-residue protein sequence, read N- to C-terminus: Met repressor (105 aa).

Belongs to the MetJ family. Homodimer.

Its subcellular location is the cytoplasm. This regulatory protein, when combined with SAM (S-adenosylmethionine) represses the expression of the methionine regulon and of enzymes involved in SAM synthesis. This Vibrio vulnificus (strain CMCP6) protein is Met repressor.